A 202-amino-acid polypeptide reads, in one-letter code: Arenicin-1 (202 aa).

The N-terminal stretch at 1–25 (MTSTQSVAVCATLILAIFCVNDIHC) is a signal peptide. The propeptide occupies 26-181 (DPIAEARAAA…SGDNNEPEKR (156 aa)). A BRICHOS domain is found at 73 to 168 (GDGVEGSVMV…ACQGKSVYWL (96 aa)). Disulfide bonds link cysteine 100–cysteine 160 and cysteine 184–cysteine 201.

Functionally, has antimicrobial activity against the Gram-negative bacteria E.coli and P.mirabilis, the Gram-positive bacterium L.monocytogenes and the yeast C.albicans. This Arenicola marina (Lugworm) protein is Arenicin-1.